The sequence spans 115 residues: Large ribosomal subunit protein bL19 (115 aa).

This sequence belongs to the bacterial ribosomal protein bL19 family.

In terms of biological role, this protein is located at the 30S-50S ribosomal subunit interface and may play a role in the structure and function of the aminoacyl-tRNA binding site. The chain is Large ribosomal subunit protein bL19 from Erwinia tasmaniensis (strain DSM 17950 / CFBP 7177 / CIP 109463 / NCPPB 4357 / Et1/99).